The following is a 287-amino-acid chain: UPF0354 protein SSP1020 (287 aa).

It belongs to the UPF0354 family.

The sequence is that of UPF0354 protein SSP1020 from Staphylococcus saprophyticus subsp. saprophyticus (strain ATCC 15305 / DSM 20229 / NCIMB 8711 / NCTC 7292 / S-41).